Here is a 715-residue protein sequence, read N- to C-terminus: Phosphoribosylformylglycinamidine synthase subunit PurL (715 aa).

His33 is an active-site residue. Tyr36 contributes to the ATP binding site. Glu77 contributes to the Mg(2+) binding site. Substrate is bound by residues 78–81 (SHNH) and Arg100. His79 serves as the catalytic Proton acceptor. A Mg(2+)-binding site is contributed by Asp101. Gln225 is a substrate binding site. Asp253 is a Mg(2+) binding site. Substrate is bound at residue 297–299 (ESQ). Residues Asn475 and Gly512 each contribute to the ATP site. Mg(2+) is bound at residue Asn513. A substrate-binding site is contributed by Ser515.

Belongs to the FGAMS family. In terms of assembly, monomer. Part of the FGAM synthase complex composed of 1 PurL, 1 PurQ and 2 PurS subunits.

It is found in the cytoplasm. It catalyses the reaction N(2)-formyl-N(1)-(5-phospho-beta-D-ribosyl)glycinamide + L-glutamine + ATP + H2O = 2-formamido-N(1)-(5-O-phospho-beta-D-ribosyl)acetamidine + L-glutamate + ADP + phosphate + H(+). The protein operates within purine metabolism; IMP biosynthesis via de novo pathway; 5-amino-1-(5-phospho-D-ribosyl)imidazole from N(2)-formyl-N(1)-(5-phospho-D-ribosyl)glycinamide: step 1/2. Part of the phosphoribosylformylglycinamidine synthase complex involved in the purines biosynthetic pathway. Catalyzes the ATP-dependent conversion of formylglycinamide ribonucleotide (FGAR) and glutamine to yield formylglycinamidine ribonucleotide (FGAM) and glutamate. The FGAM synthase complex is composed of three subunits. PurQ produces an ammonia molecule by converting glutamine to glutamate. PurL transfers the ammonia molecule to FGAR to form FGAM in an ATP-dependent manner. PurS interacts with PurQ and PurL and is thought to assist in the transfer of the ammonia molecule from PurQ to PurL. This is Phosphoribosylformylglycinamidine synthase subunit PurL from Methanosarcina acetivorans (strain ATCC 35395 / DSM 2834 / JCM 12185 / C2A).